Here is a 682-residue protein sequence, read N- to C-terminus: MSRNQLALFDAALMRVALLDALKKLDPRTQVRNPVMFVVWLGSVVTTLLAVAMAAGKTPGDTGFTVAISVWLWFTVLFANFAEALAEGRSKAQANSLKGVTKTSFAKKLNEAKYGTSHYPVAADTLRKGDWVLVEAGDIIPCDGEVLEGGASVDESAITGESAPVIRESGGDFSSVTGGTRILSDWLVVQCSVNPGETFLDRMIAMVEGATRRKTPNEIALTILLLALTIVLLLATVTLWPFSAWGGNPVSITVLVALLVCLIPTTIGGLLSAIGVAGMSRMLGANVIATSGRAVEAAGDVDVLLLDKTGTITLGNRQATQFLPAAGVSEEQLADAAQLASLADETPEGRSIVVLAKQKFNLRERDLNSMGATFIPFSAQTRMSGVNVQQRAIRKGAADAVRRYIDSNGGQFPGEVNSLVDRVARAGGTPLVVSDGNRVMGVVALKDIVKGGIKERFAELRKMGIKTVMITGDNPLTAAAIAAEAGVDDFLSEATPEAKLALIRQYQAEGRLVAMTGDGTNDAPALAQADVAVAMNSGTQAAKEAGNMVDLDSNPTKLLEVVHIGKQMLMTRGSLTTFSIANDVAKYFAILPAAFAATYPQLNQLNVMGLHSPASAILSAVIFNALVIVFLIPLALKGVSYRALSAAALLRRNLWIYGVGGLLVPFLGIKLIDMLLTVTGLA.

A run of 4 helical transmembrane segments spans residues 35-55 (VMFVVWLGSVVTTLLAVAMAA), 62-82 (TGFTVAISVWLWFTVLFANFA), 219-239 (IALTILLLALTIVLLLATVTL), and 254-274 (VLVALLVCLIPTTIGGLLSAI). The 4-aspartylphosphate intermediate role is filled by aspartate 307. Residues aspartate 344, glutamate 348, 377–384 (FSAQTRMS), and lysine 395 each bind ATP. The Mg(2+) site is built by aspartate 518 and aspartate 522. Helical transmembrane passes span 577–597 (TFSIANDVAKYFAILPAAFAA), 616–636 (AILSAVIFNALVIVFLIPLAL), and 656–676 (IYGVGGLLVPFLGIKLIDMLL).

The protein belongs to the cation transport ATPase (P-type) (TC 3.A.3) family. Type IA subfamily. As to quaternary structure, the system is composed of three essential subunits: KdpA, KdpB and KdpC.

The protein localises to the cell inner membrane. It carries out the reaction K(+)(out) + ATP + H2O = K(+)(in) + ADP + phosphate + H(+). Functionally, part of the high-affinity ATP-driven potassium transport (or Kdp) system, which catalyzes the hydrolysis of ATP coupled with the electrogenic transport of potassium into the cytoplasm. This subunit is responsible for energy coupling to the transport system and for the release of the potassium ions to the cytoplasm. The sequence is that of Potassium-transporting ATPase ATP-binding subunit from Erwinia tasmaniensis (strain DSM 17950 / CFBP 7177 / CIP 109463 / NCPPB 4357 / Et1/99).